A 513-amino-acid polypeptide reads, in one-letter code: ATP synthase subunit alpha (513 aa).

169–176 (GDRQTGKT) serves as a coordination point for ATP.

It belongs to the ATPase alpha/beta chains family. F-type ATPases have 2 components, CF(1) - the catalytic core - and CF(0) - the membrane proton channel. CF(1) has five subunits: alpha(3), beta(3), gamma(1), delta(1), epsilon(1). CF(0) has three main subunits: a(1), b(2) and c(9-12). The alpha and beta chains form an alternating ring which encloses part of the gamma chain. CF(1) is attached to CF(0) by a central stalk formed by the gamma and epsilon chains, while a peripheral stalk is formed by the delta and b chains.

It localises to the cell inner membrane. The enzyme catalyses ATP + H2O + 4 H(+)(in) = ADP + phosphate + 5 H(+)(out). Produces ATP from ADP in the presence of a proton gradient across the membrane. The alpha chain is a regulatory subunit. This is ATP synthase subunit alpha from Shewanella baltica (strain OS223).